Reading from the N-terminus, the 101-residue chain is MISIPFRSTMSRTLVFIILPTVLSCNPSSRLMNFSNSFNLCSYSTCNCDPSFCFEMINLARTSIACDNLTISFSVLFDDSHIPCYNNPRYSFNKLTMTILY.

The signal sequence occupies residues 1 to 25 (MISIPFRSTMSRTLVFIILPTVLSC).

This is an uncharacterized protein from Saccharomyces cerevisiae (strain ATCC 204508 / S288c) (Baker's yeast).